We begin with the raw amino-acid sequence, 422 residues long: Secernin-3 (422 aa).

A propeptide spanning residues 1-5 (MEPCS) is cleaved from the precursor. Residue Cys-6 is part of the active site. Cys-6 carries the post-translational modification Glyoxylic acid (Cys); alternate. A Pyruvic acid (Cys); alternate modification is found at Cys-6.

It belongs to the peptidase C69 family. Secernin subfamily.

Plays a role in thermal nociception. This Bos taurus (Bovine) protein is Secernin-3 (SCRN3).